Here is a 428-residue protein sequence, read N- to C-terminus: Histidine--tRNA ligase (428 aa).

This sequence belongs to the class-II aminoacyl-tRNA synthetase family. Homodimer.

It is found in the cytoplasm. The enzyme catalyses tRNA(His) + L-histidine + ATP = L-histidyl-tRNA(His) + AMP + diphosphate + H(+). The protein is Histidine--tRNA ligase of Lactobacillus delbrueckii subsp. bulgaricus (strain ATCC BAA-365 / Lb-18).